Reading from the N-terminus, the 753-residue chain is 5-methyltetrahydropteroyltriglutamate--homocysteine methyltransferase (753 aa).

5-methyltetrahydropteroyltri-L-glutamate contacts are provided by residues 17–20 (RELK) and K117. L-homocysteine contacts are provided by residues 431–433 (IGS) and E484. Residues 431 to 433 (IGS) and E484 contribute to the L-methionine site. 5-methyltetrahydropteroyltri-L-glutamate is bound by residues 515–516 (RC) and W561. Residue D599 participates in L-homocysteine binding. An L-methionine-binding site is contributed by D599. 5-methyltetrahydropteroyltri-L-glutamate is bound at residue E605. Positions 641, 643, and 665 each coordinate Zn(2+). The active-site Proton donor is the H694. A Zn(2+)-binding site is contributed by C726.

The protein belongs to the vitamin-B12 independent methionine synthase family. Zn(2+) serves as cofactor.

It catalyses the reaction 5-methyltetrahydropteroyltri-L-glutamate + L-homocysteine = tetrahydropteroyltri-L-glutamate + L-methionine. It functions in the pathway amino-acid biosynthesis; L-methionine biosynthesis via de novo pathway; L-methionine from L-homocysteine (MetE route): step 1/1. Functionally, catalyzes the transfer of a methyl group from 5-methyltetrahydrofolate to homocysteine resulting in methionine formation. In Escherichia coli (strain SMS-3-5 / SECEC), this protein is 5-methyltetrahydropteroyltriglutamate--homocysteine methyltransferase.